The following is an 891-amino-acid chain: Alanine--tRNA ligase (891 aa).

His-564, His-568, Cys-677, and His-681 together coordinate Zn(2+).

The protein belongs to the class-II aminoacyl-tRNA synthetase family. Zn(2+) is required as a cofactor.

Its subcellular location is the cytoplasm. It catalyses the reaction tRNA(Ala) + L-alanine + ATP = L-alanyl-tRNA(Ala) + AMP + diphosphate. Catalyzes the attachment of alanine to tRNA(Ala) in a two-step reaction: alanine is first activated by ATP to form Ala-AMP and then transferred to the acceptor end of tRNA(Ala). Also edits incorrectly charged Ser-tRNA(Ala) and Gly-tRNA(Ala) via its editing domain. The sequence is that of Alanine--tRNA ligase from Rhodopseudomonas palustris (strain BisA53).